Reading from the N-terminus, the 528-residue chain is GMP synthase [glutamine-hydrolyzing] (528 aa).

The 197-residue stretch at 3 to 199 (KVAIIDFGSQ…FLDIAGCQKD (197 aa)) folds into the Glutamine amidotransferase type-1 domain. Cys-83 functions as the Nucleophile in the catalytic mechanism. Residues His-174 and Glu-176 contribute to the active site. A GMPS ATP-PPase domain is found at 200-394 (WTVTSFIDDQ…LGISTEILMR (195 aa)). 227-233 (SGGVDSS) is a binding site for ATP.

In terms of assembly, homodimer.

The enzyme catalyses XMP + L-glutamine + ATP + H2O = GMP + L-glutamate + AMP + diphosphate + 2 H(+). It participates in purine metabolism; GMP biosynthesis; GMP from XMP (L-Gln route): step 1/1. Catalyzes the synthesis of GMP from XMP. The protein is GMP synthase [glutamine-hydrolyzing] of Ehrlichia ruminantium (strain Gardel).